Reading from the N-terminus, the 206-residue chain is Large ribosomal subunit protein uL4 (206 aa).

Residues 63–97 are disordered; it reads MYKQKGTGRARHHSARAPQFRGGGKAHGPVVRSHE. Residues 64–77 are compositionally biased toward basic residues; that stretch reads YKQKGTGRARHHSA.

The protein belongs to the universal ribosomal protein uL4 family. In terms of assembly, part of the 50S ribosomal subunit.

Its function is as follows. One of the primary rRNA binding proteins, this protein initially binds near the 5'-end of the 23S rRNA. It is important during the early stages of 50S assembly. It makes multiple contacts with different domains of the 23S rRNA in the assembled 50S subunit and ribosome. Forms part of the polypeptide exit tunnel. The chain is Large ribosomal subunit protein uL4 from Rhizobium etli (strain CIAT 652).